A 236-amino-acid polypeptide reads, in one-letter code: Small ribosomal subunit protein uS2c (236 aa).

Belongs to the universal ribosomal protein uS2 family.

The protein localises to the plastid. The protein resides in the chloroplast. This Vitis vinifera (Grape) protein is Small ribosomal subunit protein uS2c (rps2).